We begin with the raw amino-acid sequence, 102 residues long: Small ribosomal subunit protein uS10 (102 aa).

It belongs to the universal ribosomal protein uS10 family. In terms of assembly, part of the 30S ribosomal subunit.

Its function is as follows. Involved in the binding of tRNA to the ribosomes. This is Small ribosomal subunit protein uS10 from Staphylococcus haemolyticus (strain JCSC1435).